A 210-amino-acid chain; its full sequence is Uracil phosphoribosyltransferase (210 aa).

5-phospho-alpha-D-ribose 1-diphosphate contacts are provided by residues Arg-78, Arg-103, and 130-138 (DPMLATGGS). Uracil is bound by residues Ile-193 and 198 to 200 (GDA). Asp-199 contacts 5-phospho-alpha-D-ribose 1-diphosphate.

This sequence belongs to the UPRTase family. The cofactor is Mg(2+).

The catalysed reaction is UMP + diphosphate = 5-phospho-alpha-D-ribose 1-diphosphate + uracil. Its pathway is pyrimidine metabolism; UMP biosynthesis via salvage pathway; UMP from uracil: step 1/1. Its activity is regulated as follows. Allosterically activated by GTP. Functionally, catalyzes the conversion of uracil and 5-phospho-alpha-D-ribose 1-diphosphate (PRPP) to UMP and diphosphate. The sequence is that of Uracil phosphoribosyltransferase from Laribacter hongkongensis (strain HLHK9).